Reading from the N-terminus, the 450-residue chain is Tubulin beta-2 chain (450 aa).

Residues glutamine 11, glutamate 69, serine 138, glycine 142, threonine 143, glycine 144, asparagine 204, and asparagine 226 each coordinate GTP. Glutamate 69 contacts Mg(2+). The interval 428 to 450 is disordered; it reads ATAEDDVDGYAEGEAGETYESEQ. Over residues 429 to 450 the composition is skewed to acidic residues; that stretch reads TAEDDVDGYAEGEAGETYESEQ.

It belongs to the tubulin family. Dimer of alpha and beta chains. A typical microtubule is a hollow water-filled tube with an outer diameter of 25 nm and an inner diameter of 15 nm. Alpha-beta heterodimers associate head-to-tail to form protofilaments running lengthwise along the microtubule wall with the beta-tubulin subunit facing the microtubule plus end conferring a structural polarity. Microtubules usually have 13 protofilaments but different protofilament numbers can be found in some organisms and specialized cells. Mg(2+) is required as a cofactor. Cleaved by caspase ced-3 in vitro.

The protein localises to the cytoplasm. It localises to the cytoskeleton. In terms of biological role, tubulin is the major constituent of microtubules, a cylinder consisting of laterally associated linear protofilaments composed of alpha- and beta-tubulin heterodimers. Microtubules grow by the addition of GTP-tubulin dimers to the microtubule end, where a stabilizing cap forms. Below the cap, tubulin dimers are in GDP-bound state, owing to GTPase activity of alpha-tubulin. Required for the normal dynamic behavior of the non-centrosomal microtubules in the epidermal syncytium. Involved in the redistribution of microtubule end-binding protein EB1/ebp-2 caused by wounding. Required to modulate expression in the epidermis of antimicrobial peptides, such as nlp-29, after wounding, or fungal infection. The polypeptide is Tubulin beta-2 chain (tbb-2) (Caenorhabditis elegans).